The primary structure comprises 178 residues: ATP-dependent protease subunit HslV (178 aa).

Threonine 8 is an active-site residue. Residues glycine 163, cysteine 166, and threonine 169 each coordinate Na(+).

Belongs to the peptidase T1B family. HslV subfamily. In terms of assembly, a double ring-shaped homohexamer of HslV is capped on each side by a ring-shaped HslU homohexamer. The assembly of the HslU/HslV complex is dependent on binding of ATP.

The protein resides in the cytoplasm. It catalyses the reaction ATP-dependent cleavage of peptide bonds with broad specificity.. With respect to regulation, allosterically activated by HslU binding. Protease subunit of a proteasome-like degradation complex believed to be a general protein degrading machinery. The chain is ATP-dependent protease subunit HslV from Xylella fastidiosa (strain 9a5c).